The following is a 312-amino-acid chain: Ornithine carbamoyltransferase (312 aa).

Carbamoyl phosphate is bound by residues 50–53 (STRT), Gln-77, Arg-101, and 128–131 (HPCQ). L-ornithine is bound by residues Asn-160, Asp-224, and 228–229 (SM). Residues 264 to 265 (CL) and Arg-292 each bind carbamoyl phosphate.

Belongs to the aspartate/ornithine carbamoyltransferase superfamily. OTCase family.

It is found in the cytoplasm. The catalysed reaction is carbamoyl phosphate + L-ornithine = L-citrulline + phosphate + H(+). The protein operates within amino-acid biosynthesis; L-arginine biosynthesis; L-arginine from L-ornithine and carbamoyl phosphate: step 1/3. Its function is as follows. Reversibly catalyzes the transfer of the carbamoyl group from carbamoyl phosphate (CP) to the N(epsilon) atom of ornithine (ORN) to produce L-citrulline. In Leifsonia xyli subsp. xyli (strain CTCB07), this protein is Ornithine carbamoyltransferase.